The chain runs to 334 residues: Tryptophan--tRNA ligase (334 aa).

Residues 11-13 and 19-20 contribute to the ATP site; these read QPS and GN. Positions 12 to 20 match the 'HIGH' region motif; that stretch reads PSGELTIGN. Asp-135 is an L-tryptophan binding site. ATP is bound by residues 147–149, Val-186, and 195–199; these read GED and KMSKS. The short motif at 195 to 199 is the 'KMSKS' region element; the sequence is KMSKS.

This sequence belongs to the class-I aminoacyl-tRNA synthetase family. As to quaternary structure, homodimer.

The protein resides in the cytoplasm. It catalyses the reaction tRNA(Trp) + L-tryptophan + ATP = L-tryptophyl-tRNA(Trp) + AMP + diphosphate + H(+). In terms of biological role, catalyzes the attachment of tryptophan to tRNA(Trp). The chain is Tryptophan--tRNA ligase from Salmonella typhi.